Reading from the N-terminus, the 481-residue chain is Chromosomal replication initiator protein DnaA (481 aa).

A domain I, interacts with DnaA modulators region spans residues 1 to 71 (MTDLSAFWPQ…ETFAEDILGR (71 aa)). The tract at residues 71–143 (RPVTIELRIG…PAIGGGHEST (73 aa)) is domain II. The segment covering 86-96 (ASAPAAASPRS) has biased composition (low complexity). The tract at residues 86-110 (ASAPAAASPRSPGRPAPAPVAATPT) is disordered. The tract at residues 144-361 (RLNPAFTFES…GALKRVVAYS (218 aa)) is domain III, AAA+ region. ATP is bound by residues Gly-189, Gly-191, Lys-192, and Thr-193. The tract at residues 362–481 (RFSNQPISLD…YAALQQMLRN (120 aa)) is domain IV, binds dsDNA.

The protein belongs to the DnaA family. Oligomerizes as a right-handed, spiral filament on DNA at oriC.

Its subcellular location is the cytoplasm. Its function is as follows. Plays an essential role in the initiation and regulation of chromosomal replication. ATP-DnaA binds to the origin of replication (oriC) to initiate formation of the DNA replication initiation complex once per cell cycle. Binds the DnaA box (a 9 base pair repeat at the origin) and separates the double-stranded (ds)DNA. Forms a right-handed helical filament on oriC DNA; dsDNA binds to the exterior of the filament while single-stranded (ss)DNA is stabiized in the filament's interior. The ATP-DnaA-oriC complex binds and stabilizes one strand of the AT-rich DNA unwinding element (DUE), permitting loading of DNA polymerase. After initiation quickly degrades to an ADP-DnaA complex that is not apt for DNA replication. Binds acidic phospholipids. The protein is Chromosomal replication initiator protein DnaA of Laribacter hongkongensis (strain HLHK9).